We begin with the raw amino-acid sequence, 286 residues long: 2-hydroxy-6-oxo-6-phenylhexa-2,4-dienoate hydrolase (286 aa).

Substrate is bound by residues 42–43 (GG), Asn-51, Asn-111, Ser-180, and Arg-190. His-265 serves as the catalytic Proton acceptor. Trp-266 is a substrate binding site.

This sequence belongs to the AB hydrolase superfamily. BphD family. As to quaternary structure, homodimer.

The enzyme catalyses 2,6-dioxo-6-phenylhexa-3-enoate + H2O = 2-oxopent-4-enoate + benzoate + H(+). It participates in xenobiotic degradation; biphenyl degradation; 2-hydroxy-2,4-pentadienoate and benzoate from biphenyl: step 4/4. Inhibited by 3-Cl HOPDA. Its function is as follows. Catalyzes an unusual C-C bond hydrolysis of 2-hydroxy-6-oxo-6-phenylhexa-2,4-dienoic acid (HOPDA) to produce benzoic acid and 2-hydroxy-2,4-pentadienoic acid (HPD). In Paraburkholderia xenovorans (strain LB400), this protein is 2-hydroxy-6-oxo-6-phenylhexa-2,4-dienoate hydrolase (bphD).